We begin with the raw amino-acid sequence, 189 residues long: Streptothricin acetyltransferase (189 aa).

The N-acetyltransferase domain maps to 44–189 (FALREVPADP…HALYMSMPCP (146 aa)). A disordered region spans residues 55-76 (LVKVFPDDGGSDGEDGAEGEDA). Residues 63–75 (GGSDGEDGAEGED) are compositionally biased toward acidic residues.

This sequence belongs to the acetyltransferase family. GNAT subfamily.

It catalyses the reaction streptothricin F + acetyl-CoA = N(beta)-acetylstreptothricin F + CoA + H(+). Its function is as follows. Involved in resistance to streptothricin, a broad-spectrum antibiotic produced by streptomycetes. Detoxifies streptothricin via acetylation of the beta amino group of the first beta-lysyl moiety of streptothricin. The protein is Streptothricin acetyltransferase of Streptomyces lavendulae.